Consider the following 256-residue polypeptide: 4-hydroxy-tetrahydrodipicolinate reductase (256 aa).

8–13 (GASGKM) provides a ligand contact to NAD(+). An NADP(+)-binding site is contributed by lysine 36. Residues 87–89 (GTT) and 111–114 (ATNM) each bind NAD(+). Histidine 143 (proton donor/acceptor) is an active-site residue. A (S)-2,3,4,5-tetrahydrodipicolinate-binding site is contributed by histidine 144. Lysine 147 serves as the catalytic Proton donor. 153–154 (GT) serves as a coordination point for (S)-2,3,4,5-tetrahydrodipicolinate.

Belongs to the DapB family.

Its subcellular location is the cytoplasm. It catalyses the reaction (S)-2,3,4,5-tetrahydrodipicolinate + NAD(+) + H2O = (2S,4S)-4-hydroxy-2,3,4,5-tetrahydrodipicolinate + NADH + H(+). The catalysed reaction is (S)-2,3,4,5-tetrahydrodipicolinate + NADP(+) + H2O = (2S,4S)-4-hydroxy-2,3,4,5-tetrahydrodipicolinate + NADPH + H(+). Its pathway is amino-acid biosynthesis; L-lysine biosynthesis via DAP pathway; (S)-tetrahydrodipicolinate from L-aspartate: step 4/4. Functionally, catalyzes the conversion of 4-hydroxy-tetrahydrodipicolinate (HTPA) to tetrahydrodipicolinate. The protein is 4-hydroxy-tetrahydrodipicolinate reductase of Campylobacter concisus (strain 13826).